We begin with the raw amino-acid sequence, 169 residues long: S-ribosylhomocysteine lyase (169 aa).

Positions 54, 58, and 128 each coordinate Fe cation.

Belongs to the LuxS family. In terms of assembly, homodimer. Fe cation serves as cofactor.

The catalysed reaction is S-(5-deoxy-D-ribos-5-yl)-L-homocysteine = (S)-4,5-dihydroxypentane-2,3-dione + L-homocysteine. In terms of biological role, involved in the synthesis of autoinducer 2 (AI-2) which is secreted by bacteria and is used to communicate both the cell density and the metabolic potential of the environment. The regulation of gene expression in response to changes in cell density is called quorum sensing. Catalyzes the transformation of S-ribosylhomocysteine (RHC) to homocysteine (HC) and 4,5-dihydroxy-2,3-pentadione (DPD). The protein is S-ribosylhomocysteine lyase of Shewanella putrefaciens (strain CN-32 / ATCC BAA-453).